The chain runs to 249 residues: Ribonuclease 3 (249 aa).

One can recognise an RNase III domain in the interval S29–R151. Position 65 (E65) interacts with Mg(2+). D69 is an active-site residue. Mg(2+) contacts are provided by E137 and E140. E140 is an active-site residue. The 71-residue stretch at N179–N249 folds into the DRBM domain. Residues G227 to N249 form a disordered region. The segment covering Q236 to N249 has biased composition (basic and acidic residues).

It belongs to the ribonuclease III family. Homodimer. It depends on Mg(2+) as a cofactor.

The protein resides in the cytoplasm. The catalysed reaction is Endonucleolytic cleavage to 5'-phosphomonoester.. Its function is as follows. Digests double-stranded RNA. Involved in the processing of primary rRNA transcript to yield the immediate precursors to the large and small rRNAs (23S and 16S). Processes some mRNAs, and tRNAs when they are encoded in the rRNA operon. Processes pre-crRNA and tracrRNA of type II CRISPR loci if present in the organism. This is Ribonuclease 3 from Prochlorococcus marinus (strain SARG / CCMP1375 / SS120).